A 432-amino-acid polypeptide reads, in one-letter code: Glutamyl-tRNA reductase (432 aa).

Residues 49–52 (TCNR), serine 109, 114–116 (EGQ), and glutamine 120 each bind substrate. The active-site Nucleophile is cysteine 50. An NADP(+)-binding site is contributed by 198–203 (GAGRMS).

It belongs to the glutamyl-tRNA reductase family. In terms of assembly, homodimer.

The catalysed reaction is (S)-4-amino-5-oxopentanoate + tRNA(Glu) + NADP(+) = L-glutamyl-tRNA(Glu) + NADPH + H(+). Its pathway is porphyrin-containing compound metabolism; protoporphyrin-IX biosynthesis; 5-aminolevulinate from L-glutamyl-tRNA(Glu): step 1/2. It participates in porphyrin-containing compound metabolism; chlorophyll biosynthesis. Catalyzes the NADPH-dependent reduction of glutamyl-tRNA(Glu) to glutamate 1-semialdehyde (GSA). The polypeptide is Glutamyl-tRNA reductase (Synechococcus sp. (strain CC9902)).